The chain runs to 1001 residues: Non-canonical poly(A) RNA polymerase protein Trf4-1 (1001 aa).

Low complexity-rich tracts occupy residues 44–86 (TING…NNSS) and 127–163 (RNST…STNG). Disordered stretches follow at residues 44–92 (TING…PYLS) and 115–238 (QQQQ…AGGA). Residues 164–178 (PGAGTGTSTGAGGTG) are compositionally biased toward gly residues. Low complexity predominate over residues 179-216 (TNSPATTASSTAATTTGPATSMSDTSNNPPQSTTTPAS). Mn(2+) contacts are provided by aspartate 328 and aspartate 330. A PAP-associated domain is found at 458 to 517 (NLGVLLLEFFELYGRRFNYMKIGISIKNGGRYMPKDELQRDMVDGHRPSLLCIEDPLTPG). 4 disordered regions span residues 631–652 (PTAH…PGAH), 687–740 (QQQQ…AQEV), 767–963 (ASNS…LRGT), and 977–1001 (SSES…RDER). A compositionally biased stretch (basic residues) spans 635-649 (GHSHAHSHSHGHAHP). 2 stretches are compositionally biased toward low complexity: residues 687 to 708 (QQQQ…NQSQ) and 768 to 788 (SNSW…TGSS). Positions 827 to 841 (VGTGSNRGGGDGSGG) are enriched in gly residues. Polar residues predominate over residues 844 to 854 (YNQRNNHNSSG). The segment covering 855-880 (YYHQQYYVPPPMQQQLSKSNSSSNYH) has biased composition (low complexity). Positions 881 to 912 (QQHHHSHSHGNHSHRQQHHHQQQHHHQQRPQH) are enriched in basic residues. Composition is skewed to low complexity over residues 932 to 955 (SAGN…SNNS) and 977 to 992 (SSES…SSRS).

Belongs to the DNA polymerase type-B-like family. Mn(2+) is required as a cofactor.

It is found in the cytoplasm. The enzyme catalyses RNA(n) + ATP = RNA(n)-3'-adenine ribonucleotide + diphosphate. Functionally, involved in a post-transcriptional quality control mechanism limiting inappropriate expression of genetic information. Polyadenylation is required for the degradative activity of the exosome on several of its nuclear RNA substrates. Polyadenylates RNA processing and degradation intermediates of snRNAs and mRNAs. This Drosophila melanogaster (Fruit fly) protein is Non-canonical poly(A) RNA polymerase protein Trf4-1.